We begin with the raw amino-acid sequence, 494 residues long: Aldehyde dehydrogenase family 7 member A1 (494 aa).

Position 247 to 252 (247 to 252 (GSSKVG)) interacts with NAD(+). E269 (proton acceptor) is an active-site residue. Catalysis depends on C303, which acts as the Nucleophile.

Belongs to the aldehyde dehydrogenase family. As to quaternary structure, homotetramer.

The enzyme catalyses an aldehyde + NAD(+) + H2O = a carboxylate + NADH + 2 H(+). This chain is Aldehyde dehydrogenase family 7 member A1 (BTG-26), found in Brassica napus (Rape).